We begin with the raw amino-acid sequence, 385 residues long: Protein kup-1 (385 aa).

2 disordered regions span residues 1 to 20 and 326 to 385; these read MDDE…VRED and SLAS…PDEY. Basic and acidic residues-rich tracts occupy residues 8–20, 339–351, and 364–385; these read GSDH…VRED, RTDE…DDIV, and GRVE…PDEY.

The chain is Protein kup-1 (kup-1) from Caenorhabditis elegans.